The following is a 265-amino-acid chain: NAD kinase (265 aa).

D45 functions as the Proton acceptor in the catalytic mechanism. Residues 45–46 (DG), 121–122 (NE), R147, D149, 160–165 (TAYSKS), A184, and Q222 contribute to the NAD(+) site.

The protein belongs to the NAD kinase family. Requires a divalent metal cation as cofactor.

It is found in the cytoplasm. The catalysed reaction is NAD(+) + ATP = ADP + NADP(+) + H(+). Functionally, involved in the regulation of the intracellular balance of NAD and NADP, and is a key enzyme in the biosynthesis of NADP. Catalyzes specifically the phosphorylation on 2'-hydroxyl of the adenosine moiety of NAD to yield NADP. The polypeptide is NAD kinase (Lacticaseibacillus paracasei (strain ATCC 334 / BCRC 17002 / CCUG 31169 / CIP 107868 / KCTC 3260 / NRRL B-441) (Lactobacillus paracasei)).